We begin with the raw amino-acid sequence, 393 residues long: NAD(P)H-quinone oxidoreductase subunit H, chloroplastic (393 aa).

It belongs to the complex I 49 kDa subunit family. NDH is composed of at least 16 different subunits, 5 of which are encoded in the nucleus.

It is found in the plastid. Its subcellular location is the chloroplast thylakoid membrane. The enzyme catalyses a plastoquinone + NADH + (n+1) H(+)(in) = a plastoquinol + NAD(+) + n H(+)(out). It catalyses the reaction a plastoquinone + NADPH + (n+1) H(+)(in) = a plastoquinol + NADP(+) + n H(+)(out). Functionally, NDH shuttles electrons from NAD(P)H:plastoquinone, via FMN and iron-sulfur (Fe-S) centers, to quinones in the photosynthetic chain and possibly in a chloroplast respiratory chain. The immediate electron acceptor for the enzyme in this species is believed to be plastoquinone. Couples the redox reaction to proton translocation, and thus conserves the redox energy in a proton gradient. The chain is NAD(P)H-quinone oxidoreductase subunit H, chloroplastic from Cicer arietinum (Chickpea).